The chain runs to 357 residues: MKKRTFALALSMIIASGVVLGACGSSSDDKKSGDDKSSKDFTVAMVTDTGGVDDRSFNQSAWEGLQKFGKANDMEKGTDGYNYLQSASEADYKTNLNTAVRSDYDLIYGIGYKLKDAIEEVSKQKPKNQFAIVDDTIDDRDNVVSIGFKDNDGSYLVGVVAGLTTKTNKVGFVGGVKGAVIDRFEAGFTAGVKAVNPNAQIDVQYANDFAKADKGQQIASSMYSSGVDVIFHAAGGTGNGVFAEAKNLKKKDPSRAVWVIGVDRDQWDEGKVTANDGKDYNVTLTSEIKRVDIAVDDLATRTKAGDFPGGTKIEYGLDKDAVGLSEHQDNISKDVLAKVEEYKQKIVDGDIKVPEKP.

A signal peptide spans 1 to 22 (MKKRTFALALSMIIASGVVLGA). Cys-23 is lipidated: N-palmitoyl cysteine. The S-diacylglycerol cysteine moiety is linked to residue Cys-23.

The protein belongs to the BMP lipoprotein family.

The protein resides in the cell membrane. The protein is CD4+ T-cell-stimulating antigen (tcsA) of Listeria innocua serovar 6a (strain ATCC BAA-680 / CLIP 11262).